Consider the following 274-residue polypeptide: Large ribosomal subunit protein uL2 (274 aa).

Disordered regions lie at residues 28 to 55 (APHA…RHVG) and 224 to 274 (VAMN…RRRK).

It belongs to the universal ribosomal protein uL2 family. In terms of assembly, part of the 50S ribosomal subunit. Forms a bridge to the 30S subunit in the 70S ribosome.

Its function is as follows. One of the primary rRNA binding proteins. Required for association of the 30S and 50S subunits to form the 70S ribosome, for tRNA binding and peptide bond formation. It has been suggested to have peptidyltransferase activity; this is somewhat controversial. Makes several contacts with the 16S rRNA in the 70S ribosome. The sequence is that of Large ribosomal subunit protein uL2 from Pseudomonas putida (strain ATCC 47054 / DSM 6125 / CFBP 8728 / NCIMB 11950 / KT2440).